We begin with the raw amino-acid sequence, 211 residues long: Uracil phosphoribosyltransferase (211 aa).

5-phospho-alpha-D-ribose 1-diphosphate contacts are provided by residues Arg-78, Arg-103, and 130-138; that span reads DPMLATGGT. Uracil is bound by residues Ile-195 and 200–202; that span reads GDA. Position 201 (Asp-201) interacts with 5-phospho-alpha-D-ribose 1-diphosphate.

This sequence belongs to the UPRTase family. Mg(2+) is required as a cofactor.

It catalyses the reaction UMP + diphosphate = 5-phospho-alpha-D-ribose 1-diphosphate + uracil. Its pathway is pyrimidine metabolism; UMP biosynthesis via salvage pathway; UMP from uracil: step 1/1. Allosterically activated by GTP. In terms of biological role, catalyzes the conversion of uracil and 5-phospho-alpha-D-ribose 1-diphosphate (PRPP) to UMP and diphosphate. The sequence is that of Uracil phosphoribosyltransferase from Kocuria rhizophila (strain ATCC 9341 / DSM 348 / NBRC 103217 / DC2201).